The following is a 252-amino-acid chain: Putative hydro-lyase OB3382 (252 aa).

This sequence belongs to the D-glutamate cyclase family.

The chain is Putative hydro-lyase OB3382 from Oceanobacillus iheyensis (strain DSM 14371 / CIP 107618 / JCM 11309 / KCTC 3954 / HTE831).